The chain runs to 145 residues: Large ribosomal subunit protein uL11 (145 aa).

It belongs to the universal ribosomal protein uL11 family. In terms of assembly, part of the ribosomal stalk of the 50S ribosomal subunit. Interacts with L10 and the large rRNA to form the base of the stalk. L10 forms an elongated spine to which L12 dimers bind in a sequential fashion forming a multimeric L10(L12)X complex. One or more lysine residues are methylated.

Forms part of the ribosomal stalk which helps the ribosome interact with GTP-bound translation factors. This chain is Large ribosomal subunit protein uL11, found in Porphyromonas gingivalis (strain ATCC 33277 / DSM 20709 / CIP 103683 / JCM 12257 / NCTC 11834 / 2561).